The chain runs to 600 residues: NADH-quinone oxidoreductase subunit C/D (600 aa).

The NADH dehydrogenase I subunit C stretch occupies residues 1-190 (MVNNMTDLTA…SPFELTKAKQ (190 aa)). Residues 214–600 (DFMFLNLGPN…IDFVMSDVDR (387 aa)) form an NADH dehydrogenase I subunit D region.

It in the N-terminal section; belongs to the complex I 30 kDa subunit family. This sequence in the C-terminal section; belongs to the complex I 49 kDa subunit family. NDH-1 is composed of 13 different subunits. Subunits NuoB, CD, E, F, and G constitute the peripheral sector of the complex.

Its subcellular location is the cell inner membrane. The catalysed reaction is a quinone + NADH + 5 H(+)(in) = a quinol + NAD(+) + 4 H(+)(out). Functionally, NDH-1 shuttles electrons from NADH, via FMN and iron-sulfur (Fe-S) centers, to quinones in the respiratory chain. The immediate electron acceptor for the enzyme in this species is believed to be ubiquinone. Couples the redox reaction to proton translocation (for every two electrons transferred, four hydrogen ions are translocated across the cytoplasmic membrane), and thus conserves the redox energy in a proton gradient. This Escherichia coli O157:H7 protein is NADH-quinone oxidoreductase subunit C/D.